The chain runs to 447 residues: Asparagine--tRNA ligase (447 aa).

This sequence belongs to the class-II aminoacyl-tRNA synthetase family. Homodimer.

It is found in the cytoplasm. The catalysed reaction is tRNA(Asn) + L-asparagine + ATP = L-asparaginyl-tRNA(Asn) + AMP + diphosphate + H(+). The protein is Asparagine--tRNA ligase of Lactococcus lactis subsp. cremoris (strain MG1363).